The primary structure comprises 380 residues: ATP phosphoribosyltransferase regulatory subunit (380 aa).

The protein belongs to the class-II aminoacyl-tRNA synthetase family. HisZ subfamily. Heteromultimer composed of HisG and HisZ subunits.

It is found in the cytoplasm. It participates in amino-acid biosynthesis; L-histidine biosynthesis; L-histidine from 5-phospho-alpha-D-ribose 1-diphosphate: step 1/9. In terms of biological role, required for the first step of histidine biosynthesis. May allow the feedback regulation of ATP phosphoribosyltransferase activity by histidine. This Thermoanaerobacter pseudethanolicus (strain ATCC 33223 / 39E) (Clostridium thermohydrosulfuricum) protein is ATP phosphoribosyltransferase regulatory subunit.